The primary structure comprises 326 residues: Acetyl-coenzyme A carboxylase carboxyl transferase subunit beta (326 aa).

The CoA carboxyltransferase N-terminal domain occupies 25–308 (LWVKCPASGE…RRDDRSTLQL (284 aa)). The interval 298-326 (RRRDDRSTLQLTPPKTHAPKPPEPKVKPD) is disordered. The segment covering 317-326 (KPPEPKVKPD) has biased composition (basic and acidic residues).

Belongs to the AccD/PCCB family. In terms of assembly, acetyl-CoA carboxylase is a heterohexamer composed of biotin carboxyl carrier protein (AccB), biotin carboxylase (AccC) and two subunits each of ACCase subunit alpha (AccA) and ACCase subunit beta (AccD).

It localises to the cytoplasm. It catalyses the reaction N(6)-carboxybiotinyl-L-lysyl-[protein] + acetyl-CoA = N(6)-biotinyl-L-lysyl-[protein] + malonyl-CoA. Its pathway is lipid metabolism; malonyl-CoA biosynthesis; malonyl-CoA from acetyl-CoA: step 1/1. Component of the acetyl coenzyme A carboxylase (ACC) complex. Biotin carboxylase (BC) catalyzes the carboxylation of biotin on its carrier protein (BCCP) and then the CO(2) group is transferred by the transcarboxylase to acetyl-CoA to form malonyl-CoA. This Hyphomonas neptunium (strain ATCC 15444) protein is Acetyl-coenzyme A carboxylase carboxyl transferase subunit beta.